The following is a 499-amino-acid chain: METEDDLCNTNWGSSSSKSREPGSSDCGNSTFAGFTSQQKWEDASILDYEMGVEPGLQESIQANVDFLQGVRAQAWDPRTMLSNLSFMEQKIHQLQDLVHLLVGRGGQLQGRQDELAAQQQQLITTDLTSIIIQLISTAGSLLPSVKHNMSTAPGPFTGQPGSAVFPYVREANNVASQSQNNNNCGAREFDLPKPVLVDEREGHVVEEHEMKDEDDVEEGENLPPGSYEILQLEKEEILAPHTHFCTICGKGFKRDANLRMHMRGHGDEYKTAAALAKPNKESVPGSEPMLIKRYSCPFLGCKRNKEHKKFQPLKTILCVKNHYKRTHCDKSFTCSRCHTKKFSVIADLKTHEKHCGKNKWLCSCGTTFSRKDKLFGHIALFQGHTPAIPLEETKPSASTSTQRGSSEGGNNNQGMVGFNLGSASNANQETTQPGMTDGRICFEESFSPMNFDTCNFGGFHEFPRLMFDDSESSFQMLIANACGFSPRNVGESVSDTSL.

The interval 1 to 31 is disordered; it reads METEDDLCNTNWGSSSSKSREPGSSDCGNST. Residues 244 to 266 form a C2H2-type 1 zinc finger; that stretch reads HFCTICGKGFKRDANLRMHMRGH. A C2H2-type 2; atypical zinc finger spans residues 354–385; the sequence is KHCGKNKWLCSCGTTFSRKDKLFGHIALFQGH. The interval 390–436 is disordered; the sequence is PLEETKPSASTSTQRGSSEGGNNNQGMVGFNLGSASNANQETTQPGM. 2 stretches are compositionally biased toward polar residues: residues 396–415 and 422–435; these read PSAS…NNQG and GSAS…TQPG.

Expressed in roots (e.g. root tips and lateral roots), leaves, flowers (e.g. stigma, sepal, anther, and filament), stems, siliques and cotyledons.

The protein localises to the nucleus. Functionally, probable transcription factor. Together with STOP2, plays a critical role in tolerance to major stress factors in acid soils such as proton H(+) and aluminum ion Al(3+). Required for the expression of genes in response to acidic stress (e.g. ALMT1 and MATE), and Al-activated citrate exudation. The chain is Protein SENSITIVE TO PROTON RHIZOTOXICITY 1 from Arabidopsis thaliana (Mouse-ear cress).